The sequence spans 574 residues: MSSGIILLIVAIVLLVIIAYLVGVIIRKRNDSLITSLEERKQALFALPVNDEIEEVKSLHLIGQSQTSFREWNQKWVDLTVNSFADIENHIFEAENLNDTFNFIRAKHEINSVESQLNLVEEDIASIREALNILKEQEEKNSARVTHALDLYEKLQASISENEDNFGSTMPEIDKQMKNIETEFSQFVALNSSGDPVEASEVLDRAEEHTIALGQITEQIPAIVAKLEDDFPDQLDDLETGYRRLLEENYHFPEKNIEARFQEIRESIRANSSELVTLDLDRAREENTHIQERIDSLYEVFEREIAAYKVAAKNSKMLPRYLAHVKRNNEQLKNEIARLSRKYILSETESLTVKAFEKDIKEIEDSTLAVAEQFGLQEKPFSELQVTFERSIKTLTNVESGQMDVFAAVKDIEKIESQARHNLDVYVTQLHMIKRYMEKRHLPGIPQDFLSAFFTTSSQLEALMDELSRGRINIEAVSRLSEVATVAIANLEDLTYQVVQNATLTEQLLQYSNRYRSFEAGVQSSFEHALRLFEVENDYQASFDEISYALETVEPGVTDRFVNSYEKTREHIRF.

The Extracellular segment spans residues 1-7 (MSSGIIL). Residues 8–26 (LIVAIVLLVIIAYLVGVII) form a helical membrane-spanning segment. At 27 to 574 (RKRNDSLITS…YEKTREHIRF (548 aa)) the chain is on the cytoplasmic side. Coiled-coil stretches lie at residues 102-141 (NFIRAKHEINSVESQLNLVEEDIASIREALNILKEQEEKN), 274-350 (ELVT…ETES), and 459-520 (QLEA…SFEA).

It belongs to the EzrA family.

Its subcellular location is the cell membrane. Functionally, negative regulator of FtsZ ring formation; modulates the frequency and position of FtsZ ring formation. Inhibits FtsZ ring formation at polar sites. Interacts either with FtsZ or with one of its binding partners to promote depolymerization. In Streptococcus pyogenes serotype M6 (strain ATCC BAA-946 / MGAS10394), this protein is Septation ring formation regulator EzrA.